A 409-amino-acid chain; its full sequence is Inactive serine protease 35 (409 aa).

The first 20 residues, 1–20, serve as a signal peptide directing secretion; sequence MENTLLWLVILIPGWALSDG. N-linked (GlcNAc...) asparagine glycosylation is present at Asn-90. Residues 124 to 404 enclose the Peptidase S1 domain; that stretch reads VYGTDSRFSI…ICLWIHGNAA (281 aa). Cys-154 and Cys-170 are oxidised to a cystine. Basic residues predominate over residues 188–207; the sequence is VLKMRNKGGRKKRRGSKRSR. Positions 188-247 are disordered; sequence VLKMRNKGGRKKRRGSKRSRREAESAGQSQAHLRESTTQRPGKKSRRGPRVTQGRPSFQW.

This sequence belongs to the peptidase S1 family. As to expression, in ovary, it localizes to the theca cells of pre-antral follicles, the theca and granulosa cells of pre-ovulatory and ovulatory follicles, as well as to the developing corpus luteum.

The protein localises to the secreted. The sequence is that of Inactive serine protease 35 (Prss35) from Mus musculus (Mouse).